A 212-amino-acid chain; its full sequence is Large ribosomal subunit protein uL3 (212 aa).

The tract at residues 127–153 (FRGGPATHGQSDRHRAPGSIGSGTTPG) is disordered.

This sequence belongs to the universal ribosomal protein uL3 family. Part of the 50S ribosomal subunit. Forms a cluster with proteins L14 and L19.

Its function is as follows. One of the primary rRNA binding proteins, it binds directly near the 3'-end of the 23S rRNA, where it nucleates assembly of the 50S subunit. This is Large ribosomal subunit protein uL3 from Herpetosiphon aurantiacus (strain ATCC 23779 / DSM 785 / 114-95).